A 217-amino-acid polypeptide reads, in one-letter code: Ras-related protein RABA2d (217 aa).

19-26 (GDSGVGKT) contacts GTP. An Effector region motif is present at residues 41 to 49 (SKSTIGVEF). Residues 67–71 (DTAGQ), 125–128 (NKAD), and 155–156 (SA) contribute to the GTP site. The segment at 196-217 (GQGTTINVEDTSGAGKRGCCST) is disordered. 2 S-geranylgeranyl cysteine lipidation sites follow: C214 and C215.

Belongs to the small GTPase superfamily. Rab family. Expressed in root tips.

It localises to the endosome membrane. Its subcellular location is the golgi apparatus. The protein localises to the trans-Golgi network membrane. Intracellular vesicle trafficking and protein transport. The sequence is that of Ras-related protein RABA2d (RABA2D) from Arabidopsis thaliana (Mouse-ear cress).